Consider the following 372-residue polypeptide: Cyclin-dependent kinase 9 (372 aa).

One can recognise a Protein kinase domain in the interval 19–315 (YEKLAKIGQG…SDDALNHDFF (297 aa)). Residues 25–33 (IGQGTFGEV) and Lys-48 each bind ATP. Catalysis depends on Asp-149, which acts as the Proton acceptor. The disordered stretch occupies residues 341 to 372 (PPRRRGGHMPQQPANQGRNPAATNQTEFDRVF). Positions 352-366 (QPANQGRNPAATNQT) are enriched in polar residues.

The protein belongs to the protein kinase superfamily. CMGC Ser/Thr protein kinase family. CDC2/CDKX subfamily. As to quaternary structure, associates with cyclin-T to form P-TEFb. Also associates with cyclin-K.

The protein resides in the nucleus. The enzyme catalyses L-seryl-[protein] + ATP = O-phospho-L-seryl-[protein] + ADP + H(+). The catalysed reaction is L-threonyl-[protein] + ATP = O-phospho-L-threonyl-[protein] + ADP + H(+). It carries out the reaction [DNA-directed RNA polymerase] + ATP = phospho-[DNA-directed RNA polymerase] + ADP + H(+). Functionally, member of the cyclin-dependent kinase pair (CDK9/cyclin-T) complex, also called positive transcription elongation factor b (P-TEFb), which facilitates the transition from abortive to production elongation by phosphorylating the CTD (C-terminal domain) of the large subunit of RNA polymerase II (RNAP II), SUPT5H and RDBP. The CDK9/cyclin-K complex also has a kinase activity toward CTD of RNAP II and can substitute for P-TEFb in vitro. This Gallus gallus (Chicken) protein is Cyclin-dependent kinase 9 (CDK9).